The primary structure comprises 764 residues: Sesterfisherol synthase (764 aa).

The tract at residues 2-331 (EVWEHSRPIA…SPRHHAWRNN (330 aa)) is terpene cyclase. Asp-95 is a Mg(2+) binding site. Substrate is bound by residues Asp-95, 187–190 (RRDD), Asn-231, 235–239 (SFDRE), and 324–325 (RH). The DDXXD 1 signature appears at 95-99 (DDGYE). An NSE/DTE motif is present at residues 231-239 (NDYWSFDRE). The prenyltransferase stretch occupies residues 332 to 759 (SRNGLKPANH…PMLRLLLEKL (428 aa)). The tract at residues 347–372 (LITPSNNLNSSKGSEEQMQDSDNGTR) is disordered. Residues 348 to 358 (ITPSNNLNSSK) are compositionally biased toward polar residues. The isopentenyl diphosphate site is built by Lys-476, Arg-479, and His-508. Mg(2+) is bound by residues Asp-515 and Asp-519. The DDXXD 2 signature appears at 515 to 519 (DDIED). Position 524 (Arg-524) interacts with dimethylallyl diphosphate. Position 525 (Arg-525) interacts with isopentenyl diphosphate. Dimethylallyl diphosphate is bound by residues Lys-602, Thr-603, Gln-638, Asn-645, Lys-655, and Lys-665.

In the N-terminal section; belongs to the terpene synthase family. It in the C-terminal section; belongs to the FPP/GGPP synthase family. As to quaternary structure, hexamer. The cofactor is Mg(2+).

The enzyme catalyses isopentenyl diphosphate + (2E,6E)-farnesyl diphosphate = (2E,6E,10E)-geranylgeranyl diphosphate + diphosphate. It carries out the reaction isopentenyl diphosphate + (2E,6E,10E)-geranylgeranyl diphosphate = (2E,6E,10E,14E)-geranylfarnesyl diphosphate + diphosphate. The catalysed reaction is (2E,6E,10E,14E)-geranylfarnesyl diphosphate + H2O = sesterfisherol + diphosphate. Its pathway is secondary metabolite biosynthesis; terpenoid biosynthesis. Functionally, bifunctional terpene synthase; part of the gene cluster that mediates the biosynthesis of sesterfisheric acid. The bifunctional terpene synthase NfSS converts dimethylallyl diphosphate (DMAPP) and isopentenyl diphosphate (IPP) into sesterfisherol. The C-terminal prenyltransferase (PT) domain of NfSS catalyzes formation of geranylfarnesyl pyrophosphate (GFPP), whereas the N-terminal terpene cyclase (TC) domain catalyzes the cyclization of GFPP to sesterfisherol. The cytochrome P450 monooxygenase NfP450 then catalyzes oxidative modifications of sesterfisherol into sesterfisheric acid. The protein is Sesterfisherol synthase of Neosartorya fischeri (strain ATCC 1020 / DSM 3700 / CBS 544.65 / FGSC A1164 / JCM 1740 / NRRL 181 / WB 181) (Aspergillus fischerianus).